The chain runs to 591 residues: MNQGKIITVSGPLVVASGMQEANIQDICRVGHLGLVGEIIEMRRDQASIQVYEETSGIGPGEPVVTTGCPLSVELGPGLISEMFDGIQRPLDRFQKATDSDFLIRGVAIPSLDRKAKWAFIPKLSVGQEVVAGDILGTVQETAVIEHRIMVPYKVSGTLVAIHAGNFTVTDTVYEIKQEDGSIYQGSLMQTWPVRQSRPVAQKLIPVEPLVTGQRVIDTFFPVTKGGAAAVPGPFGAGKTVVQHQIAKFANVDIVIYVGCGERGNEMTDVLNEFPELIDPNTGQSIMERTVLIANTSNMPVAAREASIYTGITIAEYFRDMGYSVAIMADSTSRWAEALREMSGRLQEMPGDEGYPAYLGSRIAEYYERAGRVRTLGSQEREGTITAIGAVSPPGGDISEPVTQNTLRIVKVFWGLDAPLAQRRHFPAINWLTSYSLYQDDVGSYIDRKQESNWSNKVTRAMAILQREASLEEIVRLVGLDSLSEQDRLTMAVARQIREDYLQQNAFDSVDTFTSFPKQEAMLTNILTFNEEASKALSLGAYFKEIMEGTAQVRDRIARSKFIPEENLEQIKGLTQKVTKEIHHVLAKGGI.

233 to 240 (GPFGAGKT) is an ATP binding site.

Belongs to the ATPase alpha/beta chains family.

It catalyses the reaction ATP + H2O + 4 H(+)(in) = ADP + phosphate + 5 H(+)(out). Functionally, produces ATP from ADP in the presence of a proton gradient across the membrane. The V-type alpha chain is a catalytic subunit. The polypeptide is V-type ATP synthase alpha chain (Streptococcus pyogenes serotype M12 (strain MGAS2096)).